Consider the following 723-residue polypeptide: Ribosome quality control complex subunit 1 (723 aa).

The interval 21 to 125 (SNSNANKMTS…DKGSDDDDDD (105 aa)) is disordered. The span at 27 to 37 (KMTSGKSTAGN) shows a compositional bias: polar residues. The segment covering 93–108 (SSRRKKNKKAKRKQKN) has biased composition (basic residues). The segment covering 109–118 (HTAEAAKDKG) has biased composition (basic and acidic residues). At serine 119 the chain carries Phosphoserine. Position 158 is a phosphothreonine (threonine 158). The residue at position 160 (serine 160) is a Phosphoserine.

The protein belongs to the TCF25 family. As to quaternary structure, component of the ribosome quality control complex (RQC), composed of the E3 ubiquitin ligase RKR1/LTN1, RQC1 and RQC2, as well as CDC48 and its ubiquitin-binding cofactors. RQC forms a stable complex with 60S ribosomal subunits.

Its subcellular location is the cytoplasm. In terms of biological role, component of the ribosome quality control complex (RQC), a ribosome-associated complex that mediates ubiquitination and extraction of incompletely synthesized nascent chains for proteasomal degradation. Within the RQC complex, RQC1 is essential for the recruitment of CDC48 to incompletely synthesized nascent polypeptides that are ubiquitinated by RKR1/LTN1. This Saccharomyces cerevisiae (strain ATCC 204508 / S288c) (Baker's yeast) protein is Ribosome quality control complex subunit 1.